The chain runs to 734 residues: ABC transporter D family member 1 (734 aa).

A run of 4 helical transmembrane segments spans residues 52–72, 112–132, 177–197, and 204–224; these read IIKI…ILFG, FAIG…SIMA, FTTL…VVVY, and TTID…GYLI. The 289-residue stretch at 63–351 folds into the ABC transmembrane type-1 domain; it reads PLTLFLILFG…VEEEQAKIQF (289 aa). The span at 271–286 shows a compositional bias: basic and acidic residues; it reads HPEKRFDNNDYDHGYE. Positions 271-296 are disordered; it reads HPEKRFDNNDYDHGYESDDSDQSCDE. Positions 332–359 form a coiled coil; it reads DSNDQKEELLVEEEQAKIQFEALLKNKK. Residues 374–394 form a helical membrane-spanning segment; sequence LFTYLSPIANYFIIAIPVFFL. Positions 492–729 constitute an ABC transporter domain; the sequence is ITLDDVTYFT…NNNNTNKIAE (238 aa). 525-532 lines the ATP pocket; that stretch reads GPSGSGKS. Residues 712-725 are compositionally biased toward low complexity; that stretch reads QSNNINNNNNNNTN. The tract at residues 712–734 is disordered; it reads QSNNINNNNNNNTNKIAEDSVFD.

Belongs to the ABC transporter superfamily. ABCD family. Peroxisomal fatty acyl CoA transporter (TC 3.A.1.203) subfamily.

The protein resides in the membrane. The catalysed reaction is (9Z)-octadecenoyl-CoA(in) = (9Z)-octadecenoyl-CoA(out). This Dictyostelium discoideum (Social amoeba) protein is ABC transporter D family member 1 (abcD1).